A 210-amino-acid chain; its full sequence is Outer-membrane lipoprotein carrier protein (210 aa).

An N-terminal signal peptide occupies residues 1 to 23 (MLMFSRFRYIFFAVALLSGPVCA).

This sequence belongs to the LolA family. In terms of assembly, monomer.

Its subcellular location is the periplasm. Participates in the translocation of lipoproteins from the inner membrane to the outer membrane. Only forms a complex with a lipoprotein if the residue after the N-terminal Cys is not an aspartate (The Asp acts as a targeting signal to indicate that the lipoprotein should stay in the inner membrane). The protein is Outer-membrane lipoprotein carrier protein of Xylella fastidiosa (strain Temecula1 / ATCC 700964).